Consider the following 398-residue polypeptide: Phosphoglycerate kinase (398 aa).

Substrate-binding positions include 21 to 23 (DFN), Arg36, 59 to 62 (HLGR), Arg119, and Arg157. Residues Lys208, Gly296, Glu327, and 354-357 (GGDS) contribute to the ATP site.

It belongs to the phosphoglycerate kinase family. Monomer.

It is found in the cytoplasm. The enzyme catalyses (2R)-3-phosphoglycerate + ATP = (2R)-3-phospho-glyceroyl phosphate + ADP. Its pathway is carbohydrate degradation; glycolysis; pyruvate from D-glyceraldehyde 3-phosphate: step 2/5. This is Phosphoglycerate kinase from Streptococcus sanguinis (strain SK36).